The sequence spans 151 residues: MSKRTEQLTELLAPVVEDLGFVLWGVEYIQGRGAVLRVFIDHADGISVDDCAAVSHEVSGVLDVEDPIPGEFNLEVSSPGMDRPMFDITQYVDYIGEDVQLKLLAPVSGKRKMTAAIVAVDGDTLVVELDGETLRVPYSQVDRARLQPRFN.

Belongs to the RimP family.

It is found in the cytoplasm. In terms of biological role, required for maturation of 30S ribosomal subunits. The protein is Ribosome maturation factor RimP of Alcanivorax borkumensis (strain ATCC 700651 / DSM 11573 / NCIMB 13689 / SK2).